The sequence spans 346 residues: Holliday junction branch migration complex subunit RuvB (346 aa).

Residues 1–182 (MSEPARLISP…FGIPVRLSFY (182 aa)) are large ATPase domain (RuvB-L). ATP contacts are provided by residues leucine 21, arginine 22, glycine 63, lysine 66, threonine 67, threonine 68, 129 to 131 (EDF), arginine 172, tyrosine 182, and arginine 219. Threonine 67 is a binding site for Mg(2+). Positions 183–253 (TVEELELIVR…IADEALTRLL (71 aa)) are small ATPAse domain (RuvB-S). The segment at 256–346 (NVGFDQLDKR…AQFRLFQEDN (91 aa)) is head domain (RuvB-H). Positions 292, 311, and 316 each coordinate DNA.

This sequence belongs to the RuvB family. In terms of assembly, homohexamer. Forms an RuvA(8)-RuvB(12)-Holliday junction (HJ) complex. HJ DNA is sandwiched between 2 RuvA tetramers; dsDNA enters through RuvA and exits via RuvB. An RuvB hexamer assembles on each DNA strand where it exits the tetramer. Each RuvB hexamer is contacted by two RuvA subunits (via domain III) on 2 adjacent RuvB subunits; this complex drives branch migration. In the full resolvosome a probable DNA-RuvA(4)-RuvB(12)-RuvC(2) complex forms which resolves the HJ.

The protein resides in the cytoplasm. The enzyme catalyses ATP + H2O = ADP + phosphate + H(+). Its function is as follows. The RuvA-RuvB-RuvC complex processes Holliday junction (HJ) DNA during genetic recombination and DNA repair, while the RuvA-RuvB complex plays an important role in the rescue of blocked DNA replication forks via replication fork reversal (RFR). RuvA specifically binds to HJ cruciform DNA, conferring on it an open structure. The RuvB hexamer acts as an ATP-dependent pump, pulling dsDNA into and through the RuvAB complex. RuvB forms 2 homohexamers on either side of HJ DNA bound by 1 or 2 RuvA tetramers; 4 subunits per hexamer contact DNA at a time. Coordinated motions by a converter formed by DNA-disengaged RuvB subunits stimulates ATP hydrolysis and nucleotide exchange. Immobilization of the converter enables RuvB to convert the ATP-contained energy into a lever motion, pulling 2 nucleotides of DNA out of the RuvA tetramer per ATP hydrolyzed, thus driving DNA branch migration. The RuvB motors rotate together with the DNA substrate, which together with the progressing nucleotide cycle form the mechanistic basis for DNA recombination by continuous HJ branch migration. Branch migration allows RuvC to scan DNA until it finds its consensus sequence, where it cleaves and resolves cruciform DNA. This chain is Holliday junction branch migration complex subunit RuvB, found in Rhizobium leguminosarum bv. trifolii (strain WSM2304).